A 324-amino-acid chain; its full sequence is Methionyl-tRNA formyltransferase (324 aa).

Position 109–112 (109–112 (SILP)) interacts with (6S)-5,6,7,8-tetrahydrofolate.

The protein belongs to the Fmt family.

It carries out the reaction L-methionyl-tRNA(fMet) + (6R)-10-formyltetrahydrofolate = N-formyl-L-methionyl-tRNA(fMet) + (6S)-5,6,7,8-tetrahydrofolate + H(+). Functionally, attaches a formyl group to the free amino group of methionyl-tRNA(fMet). The formyl group appears to play a dual role in the initiator identity of N-formylmethionyl-tRNA by promoting its recognition by IF2 and preventing the misappropriation of this tRNA by the elongation apparatus. In Acidothermus cellulolyticus (strain ATCC 43068 / DSM 8971 / 11B), this protein is Methionyl-tRNA formyltransferase.